Here is a 525-residue protein sequence, read N- to C-terminus: ESX-1 secretion-associated protein EspE (525 aa).

Disordered regions lie at residues 244-341 (AVAG…PGAA) and 375-494 (ALQA…APVH). Over residues 248–258 (DADDTTADDTA) the composition is skewed to acidic residues. A compositionally biased stretch (basic and acidic residues) spans 274–286 (ETSKEDGQSRHEN). Residues 292–306 (SGGGGGATSGGGGGA) are compositionally biased toward gly residues. Low complexity-rich tracts occupy residues 307 to 319 (PSSASSAGPAGTP), 332 to 341 (TPTDAQPGAA), and 375 to 397 (ALQAATQAGAQAAQLAGQAAAAP). Residues 411–440 (DPDAEGDKDSDKRDGEGKEDGTAPRDREST) show a composition bias toward basic and acidic residues.

The protein localises to the cytoplasm. The protein is ESX-1 secretion-associated protein EspE of Mycolicibacterium smegmatis (strain ATCC 700084 / mc(2)155) (Mycobacterium smegmatis).